A 113-amino-acid chain; its full sequence is Protein FMC1 homolog (113 aa).

The interval 94-113 (SAGLVGLKLPHQPGGKGWEP) is disordered.

This sequence belongs to the FMC1 family. As to quaternary structure, interacts with ATPAF2.

The protein localises to the mitochondrion. Its function is as follows. Plays a role in the assembly/stability of the mitochondrial membrane ATP synthase (F(1)F(0) ATP synthase or Complex V). The chain is Protein FMC1 homolog from Homo sapiens (Human).